The sequence spans 478 residues: tRNA (guanine(10)-N(2))-methyltransferase TRMT11 (478 aa).

The segment at 457–478 (EERARSEMANAENVKSKGKEDV) is disordered.

The protein belongs to the class I-like SAM-binding methyltransferase superfamily. TRM11 methyltransferase family. Part of the heterodimeric TRMT11-TRM112 methyltransferase complex; this complex forms an active tRNA methyltransferase, where TRMT112 acts as an activator of the catalytic subunit TRMT11.

It is found in the cytoplasm. The catalysed reaction is guanosine(10) in tRNA + S-adenosyl-L-methionine = N(2)-methylguanosine(10) in tRNA + S-adenosyl-L-homocysteine + H(+). In terms of biological role, catalytic subunit of the TRMT11-TRM112 methyltransferase complex, that specifically mediates the S-adenosyl-L-methionine-dependent N(2)-methylation of guanosine nucleotide at position 10 (m2G10) in tRNAs. This is one of the major tRNA (guanine-N(2))-methyltransferases. The chain is tRNA (guanine(10)-N(2))-methyltransferase TRMT11 (trmt11.L) from Xenopus laevis (African clawed frog).